The primary structure comprises 752 residues: DNA ligase (752 aa).

The interval 1-25 is disordered; that stretch reads MKRNGFVPSNSVGRRGIPSNSTSSA. NAD(+)-binding positions include 91–95, 140–141, and E170; these read DADFD and SL. K172 (N6-AMP-lysine intermediate) is an active-site residue. Residues R193, E233, K350, and K374 each contribute to the NAD(+) site. Residues C474, C477, C493, and C499 each contribute to the Zn(2+) site. Positions 669–752 constitute a BRCT domain; sequence STPRTLAGLT…TLLDGGPAAL (84 aa).

This sequence belongs to the NAD-dependent DNA ligase family. LigA subfamily. The cofactor is Mg(2+). Mn(2+) is required as a cofactor.

It catalyses the reaction NAD(+) + (deoxyribonucleotide)n-3'-hydroxyl + 5'-phospho-(deoxyribonucleotide)m = (deoxyribonucleotide)n+m + AMP + beta-nicotinamide D-nucleotide.. Functionally, DNA ligase that catalyzes the formation of phosphodiester linkages between 5'-phosphoryl and 3'-hydroxyl groups in double-stranded DNA using NAD as a coenzyme and as the energy source for the reaction. It is essential for DNA replication and repair of damaged DNA. The chain is DNA ligase from Nocardioides sp. (strain ATCC BAA-499 / JS614).